The primary structure comprises 341 residues: MKVSDFYFELPEELIAQYPLEKRDSSRLMVLDKKTGEIEHRKFHDILEYLNEGDTLVLNNTRVLPARLIGEKEETGGKIEFLLLKRIEGDKWECLAKPGRKAKVGTVFTFGEGKLKAIVREIGEEGNRIIEFKYDGIFEQVLDELGQMPLPPYIHEKLEDKERYQTVYSKEKGSAAAPTAGLHFTEDLLKEIKDKGVNIAYLTLHVGLGTFRPVKVDDVNNHVMHSEYYHLDKENAELINKTKEAGKRVIAVGTTSSRTLETIGDENGRVREQSGWTDIFIYPGYKFKIVDNLITNFHLPESTLIMLVSALAGQDNIMNAYNTAVKEKYRFFSFGDSMFIK.

It belongs to the QueA family. As to quaternary structure, monomer.

The protein localises to the cytoplasm. The catalysed reaction is 7-aminomethyl-7-carbaguanosine(34) in tRNA + S-adenosyl-L-methionine = epoxyqueuosine(34) in tRNA + adenine + L-methionine + 2 H(+). It participates in tRNA modification; tRNA-queuosine biosynthesis. Transfers and isomerizes the ribose moiety from AdoMet to the 7-aminomethyl group of 7-deazaguanine (preQ1-tRNA) to give epoxyqueuosine (oQ-tRNA). The sequence is that of S-adenosylmethionine:tRNA ribosyltransferase-isomerase from Clostridium perfringens (strain SM101 / Type A).